A 300-amino-acid chain; its full sequence is 4-diphosphocytidyl-2-C-methyl-D-erythritol kinase (300 aa).

Residue Lys22 is part of the active site. ATP is bound at residue 105–115 (PMGGGLGGGSS). Residue Asp147 is part of the active site.

The protein belongs to the GHMP kinase family. IspE subfamily.

It catalyses the reaction 4-CDP-2-C-methyl-D-erythritol + ATP = 4-CDP-2-C-methyl-D-erythritol 2-phosphate + ADP + H(+). It participates in isoprenoid biosynthesis; isopentenyl diphosphate biosynthesis via DXP pathway; isopentenyl diphosphate from 1-deoxy-D-xylulose 5-phosphate: step 3/6. Catalyzes the phosphorylation of the position 2 hydroxy group of 4-diphosphocytidyl-2C-methyl-D-erythritol. The sequence is that of 4-diphosphocytidyl-2-C-methyl-D-erythritol kinase from Colwellia psychrerythraea (strain 34H / ATCC BAA-681) (Vibrio psychroerythus).